A 403-amino-acid polypeptide reads, in one-letter code: NADH-quinone oxidoreductase subunit D (403 aa).

Belongs to the complex I 49 kDa subunit family. NDH-1 is composed of 15 different subunits. Subunits NuoB, C, D, E, F, and G constitute the peripheral sector of the complex.

It localises to the cell membrane. It catalyses the reaction a quinone + NADH + 5 H(+)(in) = a quinol + NAD(+) + 4 H(+)(out). NDH-1 shuttles electrons from NADH, via FMN and iron-sulfur (Fe-S) centers, to quinones in the respiratory chain. The immediate electron acceptor for the enzyme in this species is believed to be a menaquinone. Couples the redox reaction to proton translocation (for every two electrons transferred, four hydrogen ions are translocated across the cytoplasmic membrane), and thus conserves the redox energy in a proton gradient. This is NADH-quinone oxidoreductase subunit D from Deinococcus geothermalis (strain DSM 11300 / CIP 105573 / AG-3a).